The chain runs to 240 residues: Octanoyltransferase (240 aa).

The region spanning H49–R233 is the BPL/LPL catalytic domain. Substrate contacts are provided by residues R87–H94, A162–G164, and G175–A177. C193 functions as the Acyl-thioester intermediate in the catalytic mechanism.

This sequence belongs to the LipB family.

Its subcellular location is the cytoplasm. The catalysed reaction is octanoyl-[ACP] + L-lysyl-[protein] = N(6)-octanoyl-L-lysyl-[protein] + holo-[ACP] + H(+). Its pathway is protein modification; protein lipoylation via endogenous pathway; protein N(6)-(lipoyl)lysine from octanoyl-[acyl-carrier-protein]: step 1/2. In terms of biological role, catalyzes the transfer of endogenously produced octanoic acid from octanoyl-acyl-carrier-protein onto the lipoyl domains of lipoate-dependent enzymes. Lipoyl-ACP can also act as a substrate although octanoyl-ACP is likely to be the physiological substrate. The chain is Octanoyltransferase from Bradyrhizobium sp. (strain ORS 278).